The primary structure comprises 453 residues: MDYANRHVTVVGLGGSGLAAARYLAAHGARVRVADANPSAERLAELERCLPGVEVMVGAFDDATFAGAELLVVSPGVPLANPAIAAFRRAGGEVVGDIEILARAIQGDGSKVIAITGSNGKSTVTSLVGHLCEAAGLDTVVAGNIGLAVLEALLAREQSGKRPDVWVLELSSFQLESTFSLAADAATVLNISEDHLDRYADLLDYAHAKTRVFNGKGVQVLNKDDALVRAMVRPGHPVKWFSLNGAADYALARNGGYWLKVDGEKVFDCADMQLQGLHNAANALAALGLCQGIGLPLEKLLDGLKTFRGLAHRVELVDEFDGIAFIDDSKGTNVGATEAALNGMTRQVVLIAGGDGKGQDFAPLKPACQRIARAVLLIGRDAGRIEAALEDSGLALERCDTLEEATRRAAALARPGDVVLLSPACASLDMFKNYAHRAQVFIDTVAAVKAARA.

117–123 contacts ATP; the sequence is GSNGKST.

Belongs to the MurCDEF family.

Its subcellular location is the cytoplasm. The catalysed reaction is UDP-N-acetyl-alpha-D-muramoyl-L-alanine + D-glutamate + ATP = UDP-N-acetyl-alpha-D-muramoyl-L-alanyl-D-glutamate + ADP + phosphate + H(+). The protein operates within cell wall biogenesis; peptidoglycan biosynthesis. Cell wall formation. Catalyzes the addition of glutamate to the nucleotide precursor UDP-N-acetylmuramoyl-L-alanine (UMA). In Chromobacterium violaceum (strain ATCC 12472 / DSM 30191 / JCM 1249 / CCUG 213 / NBRC 12614 / NCIMB 9131 / NCTC 9757 / MK), this protein is UDP-N-acetylmuramoylalanine--D-glutamate ligase.